The chain runs to 436 residues: MSSLPMFDSVSRFLPTANEDEQFWWKLTGRHMARMMHEAGYPEDRQVECLLFHRFKVVPCLGPRPHSDKPWYKSRVGGGAADGCPINYSWRFGTSDRKPHIRNFIEPLGALTNTPADPLNEVATKALLRDYSMTLPNVDLELFWTFAPHYRPRIIEKADMEKLAGASLLVGAEMSPDSRNIDIKAYMYPRVPSQTSQLLTTILPQAMRDAYGEDVCLDSLNLVRDFMTNDPEGSQLTLTGTTGIDCCKLQDTRVKIYVITRNTSFDHIAAIMTLGGRRPISEELLNQLRALWFELKGAPADFTSSEQLPAQTKPDGTKNPIVVPFYFDIQPRLALPDVKAYVDVSTSPVSDLAAAEAVVRHLERHGSGQNPKAYMNVLQDITPVEELETRKGALAFYSIAVKKNELDITSYFNPQVYKRYFAHEVQLNGQRRSAFE.

The protein belongs to the tryptophan dimethylallyltransferase family.

Its pathway is secondary metabolite biosynthesis. Prenyltransferase; part of the gene cluster that mediates the biosynthesis of neosartoricin B, a prenylated anthracenone that probably exhibits T-cell antiproliferative activity, suggestive of a physiological role as an immunosuppressive agent. The non-reducing polyketide synthase nscA probably synthesizes and cyclizes the decaketide backbone. The hydrolase nscB then mediates the product release through hydrolysis followed by spontaneous decarboxylation. The prenyltransferase nscD catalyzes the addition of the dimethylallyl group to the aromatic C5. The FAD-dependent monooxygenase nscC is then responsible for the stereospecific hydroxylation at C2. Neosartoricin B can be converted into two additional compounds neosartoricins C and D. Neosartoricin C is a spirocyclic compound that is cyclized through the attack of C3 hydroxyl on C14, followed by dehydration. On the other hand, neosartoricin D is a further cyclized compound in which attack of C2 on C14 in neosartoricin C results in the formation of the acetal-containing dioxabicyclo-octanone ring. Both of these compounds are novel and possibly represent related metabolites of the gene cluster. The chain is Prenyltransferase nscD from Arthroderma otae (strain ATCC MYA-4605 / CBS 113480) (Microsporum canis).